The primary structure comprises 324 residues: Serine/threonine-protein phosphatase PP1 isozyme 8 (324 aa).

Residues Asp-66, His-68, Asp-94, and Asn-126 each contribute to the Mn(2+) site. The active-site Proton donor is the His-127. The Mn(2+) site is built by His-175 and His-250.

It belongs to the PPP phosphatase family. PP-1 subfamily. Requires Mn(2+) as cofactor. Expressed in roots, rosettes and flowers.

It is found in the nucleus. Its subcellular location is the cytoplasm. The enzyme catalyses O-phospho-L-seryl-[protein] + H2O = L-seryl-[protein] + phosphate. It carries out the reaction O-phospho-L-threonyl-[protein] + H2O = L-threonyl-[protein] + phosphate. Its activity is regulated as follows. Phosphatase activity is strongly reduced by the protein phosphatase inhibitor 2 (I-2). Functionally, serine/threonine-protein phosphatase that possesses phosphatase activity toward para-nitrophenyl phosphate (pNPP) in vitro. This is Serine/threonine-protein phosphatase PP1 isozyme 8 from Arabidopsis thaliana (Mouse-ear cress).